A 145-amino-acid polypeptide reads, in one-letter code: UPF0179 protein Msm_0285 (145 aa).

The protein belongs to the UPF0179 family.

The chain is UPF0179 protein Msm_0285 from Methanobrevibacter smithii (strain ATCC 35061 / DSM 861 / OCM 144 / PS).